A 457-amino-acid polypeptide reads, in one-letter code: MSPQTETKASVGFKAGVKEYKLTYYTPDYETKDTDILAAFRVTPQPGVPPEEAGAAVAAESSTGTWTTVWTDGLTSLDRYKGRCYHIEPVPGEESQFIAYVAYPLDLFEEGSVTNMFTSIVGNVFGFKALRALRLEDLRIPPAYVKTFQGPPHGIQVERDKLNKYGRPLLGCTIKPKLGLSAKNYGRAVYECLRGGLDFTKDDENVNSQPFMRWRDRFVFCAEALYKAQAETGEIKGHYLNATAGTCEEMNKRAVFARELGVPIVMHDYLTGGFTANTSLAHYCRDNGLLLHIHRAMHAVIDRQKNHGIHFRVLAKALRMSGGDHIHAGTVVGKLEGERDITSGFVDLLRDDFVKKDRSRGIYFTQDWVSLPGVLPVASGGIHVWHMPALTEIFGDDSVLQFGGGTLGHPWGNAPGAVANRVALEACVQARNEGRDLAREGNDIIREASKWSPELAA.

A propeptide spanning residues 1–2 (MS) is cleaved from the precursor. Pro-3 is modified (N-acetylproline). Lys-14 carries the N6,N6,N6-trimethyllysine modification. Substrate contacts are provided by Asn-123 and Thr-173. Lys-175 functions as the Proton acceptor in the catalytic mechanism. Lys-177 is a binding site for substrate. Mg(2+) is bound by residues Lys-201, Asp-203, and Glu-204. The residue at position 201 (Lys-201) is an N6-carboxylysine. The active-site Proton acceptor is the His-294. Substrate contacts are provided by Arg-295, His-327, and Ser-379.

This sequence belongs to the RuBisCO large chain family. Type I subfamily. Heterohexadecamer of 8 large chains and 8 small chains; disulfide-linked. The disulfide link is formed within the large subunit homodimers. Requires Mg(2+) as cofactor. The disulfide bond which can form in the large chain dimeric partners within the hexadecamer appears to be associated with oxidative stress and protein turnover.

It is found in the plastid. The protein localises to the chloroplast. It catalyses the reaction 2 (2R)-3-phosphoglycerate + 2 H(+) = D-ribulose 1,5-bisphosphate + CO2 + H2O. It carries out the reaction D-ribulose 1,5-bisphosphate + O2 = 2-phosphoglycolate + (2R)-3-phosphoglycerate + 2 H(+). Functionally, ruBisCO catalyzes two reactions: the carboxylation of D-ribulose 1,5-bisphosphate, the primary event in carbon dioxide fixation, as well as the oxidative fragmentation of the pentose substrate in the photorespiration process. Both reactions occur simultaneously and in competition at the same active site. In Phelline comosa, this protein is Ribulose bisphosphate carboxylase large chain.